Here is a 347-residue protein sequence, read N- to C-terminus: Phenylalanine--tRNA ligase alpha subunit (347 aa).

Glu-262 serves as a coordination point for Mg(2+).

It belongs to the class-II aminoacyl-tRNA synthetase family. Phe-tRNA synthetase alpha subunit type 1 subfamily. In terms of assembly, tetramer of two alpha and two beta subunits. Requires Mg(2+) as cofactor.

It is found in the cytoplasm. It catalyses the reaction tRNA(Phe) + L-phenylalanine + ATP = L-phenylalanyl-tRNA(Phe) + AMP + diphosphate + H(+). This is Phenylalanine--tRNA ligase alpha subunit from Roseiflexus castenholzii (strain DSM 13941 / HLO8).